We begin with the raw amino-acid sequence, 1613 residues long: Myosin-IIIa (1613 aa).

One can recognise a Protein kinase domain in the interval Trp-21–Ile-287. ATP contacts are provided by residues Ile-27–Val-35 and Lys-50. Asp-150 acts as the Proton acceptor in catalysis. One can recognise a Myosin motor domain in the interval Lys-338–Lys-1052. The interval Leu-933 to Asn-955 is actin-binding. IQ domains follow at residues Ala-1054–Ser-1083 and Arg-1081–Thr-1110. Disordered stretches follow at residues Val-1136–Phe-1168 and Ser-1476–Thr-1506. The segment covering Pro-1145–Ser-1161 has biased composition (low complexity). The interval Glu-1398–Ser-1476 is interaction with MORN4. The span at Arg-1488–Lys-1497 shows a compositional bias: basic residues.

The protein in the C-terminal section; belongs to the TRAFAC class myosin-kinesin ATPase superfamily. Myosin family. In the N-terminal section; belongs to the protein kinase superfamily. STE Ser/Thr protein kinase family. Interacts with MORN4. Interacts (via C-terminus) with ESPN and ESPNL. As to expression, expressed in the cochlear hair cells (at protein level). Expressed in utricle hair bundles (at protein level).

The protein localises to the cytoplasm. It is found in the cytoskeleton. Its subcellular location is the cell projection. It localises to the filopodium tip. The protein resides in the stereocilium. It catalyses the reaction L-seryl-[protein] + ATP = O-phospho-L-seryl-[protein] + ADP + H(+). The catalysed reaction is L-threonyl-[protein] + ATP = O-phospho-L-threonyl-[protein] + ADP + H(+). The enzyme catalyses ATP + H2O = ADP + phosphate + H(+). Functionally, actin-dependent motor protein with a protein kinase activity, playing an essential role in hearing. Probably plays also a role in vision. Required for normal cochlear hair bundle development and hearing. Plays an important role in the early steps of cochlear hair bundle morphogenesis. Influences the number and lengths of stereocilia to be produced and limits the growth of microvilli within the forming auditory hair bundles thereby contributing to the architecture of the hair bundle, including its staircase pattern. Involved in the elongation of actin in stereocilia tips by transporting the actin regulatory factor ESPN to the plus ends of actin filaments. This is Myosin-IIIa (Myo3a) from Mus musculus (Mouse).